An 86-amino-acid polypeptide reads, in one-letter code: Large ribosomal subunit protein eL31 (86 aa).

This sequence belongs to the eukaryotic ribosomal protein eL31 family.

The protein is Large ribosomal subunit protein eL31 of Methanopyrus kandleri (strain AV19 / DSM 6324 / JCM 9639 / NBRC 100938).